A 179-amino-acid chain; its full sequence is Replication restart protein DnaT (179 aa).

The interval 156-179 is disordered; it reads GGLPKRDVNTVSEPDSQIPPGFRG.

Belongs to the DnaT family. As to quaternary structure, homooligomerizes. Interacts with PriB. Component of the replication restart primosome. Primosome assembly occurs via a 'hand-off' mechanism. PriA binds to replication forks, subsequently PriB then DnaT bind; DnaT then displaces ssDNA to generate the helicase loading substrate.

Functionally, involved in the restart of stalled replication forks, which reloads the replicative helicase on sites other than the origin of replication. Can function in multiple replication restart pathways. Displaces ssDNA from a PriB-ssDNA complex. Probably forms a spiral filament on ssDNA. This Escherichia coli (strain ATCC 8739 / DSM 1576 / NBRC 3972 / NCIMB 8545 / WDCM 00012 / Crooks) protein is Replication restart protein DnaT.